The following is a 541-amino-acid chain: 2-succinyl-5-enolpyruvyl-6-hydroxy-3-cyclohexene-1-carboxylate synthase (541 aa).

It belongs to the TPP enzyme family. MenD subfamily. As to quaternary structure, homodimer. It depends on Mg(2+) as a cofactor. Requires Mn(2+) as cofactor. Thiamine diphosphate serves as cofactor.

It catalyses the reaction isochorismate + 2-oxoglutarate + H(+) = 5-enolpyruvoyl-6-hydroxy-2-succinyl-cyclohex-3-ene-1-carboxylate + CO2. The protein operates within quinol/quinone metabolism; 1,4-dihydroxy-2-naphthoate biosynthesis; 1,4-dihydroxy-2-naphthoate from chorismate: step 2/7. It participates in quinol/quinone metabolism; menaquinone biosynthesis. Functionally, catalyzes the thiamine diphosphate-dependent decarboxylation of 2-oxoglutarate and the subsequent addition of the resulting succinic semialdehyde-thiamine pyrophosphate anion to isochorismate to yield 2-succinyl-5-enolpyruvyl-6-hydroxy-3-cyclohexene-1-carboxylate (SEPHCHC). The protein is 2-succinyl-5-enolpyruvyl-6-hydroxy-3-cyclohexene-1-carboxylate synthase of Rhodococcus opacus (strain B4).